The chain runs to 408 residues: Acetylornithine aminotransferase (408 aa).

Pyridoxal 5'-phosphate contacts are provided by residues 107–108 (GT) and F141. R144 lines the N(2)-acetyl-L-ornithine pocket. Residue 227 to 230 (DEIQ) coordinates pyridoxal 5'-phosphate. N6-(pyridoxal phosphate)lysine is present on K256. Residue T284 participates in N(2)-acetyl-L-ornithine binding. T285 contributes to the pyridoxal 5'-phosphate binding site.

Belongs to the class-III pyridoxal-phosphate-dependent aminotransferase family. ArgD subfamily. In terms of assembly, homodimer. It depends on pyridoxal 5'-phosphate as a cofactor.

The protein localises to the cytoplasm. It carries out the reaction N(2)-acetyl-L-ornithine + 2-oxoglutarate = N-acetyl-L-glutamate 5-semialdehyde + L-glutamate. The protein operates within amino-acid biosynthesis; L-arginine biosynthesis; N(2)-acetyl-L-ornithine from L-glutamate: step 4/4. This Xanthomonas campestris pv. campestris (strain ATCC 33913 / DSM 3586 / NCPPB 528 / LMG 568 / P 25) protein is Acetylornithine aminotransferase.